A 458-amino-acid chain; its full sequence is Transcription factor ORF10 (458 aa).

The zn(2)-C6 fungal-type DNA-binding region spans 38–65 (CESCRLKKLRCSGHKSGCDRCRSQAMKC). A disordered region spans residues 69 to 109 (IGAPSNSSRPKSRSHFQPNFSNMSGTAGTSKAPSPLGNDGV). Over residues 71-100 (APSNSSRPKSRSHFQPNFSNMSGTAGTSKA) the composition is skewed to polar residues.

It localises to the nucleus. Transcription factor that specifically regulates the expression of the gene cluster that mediates the biosynthesis of PR-toxin, a bicyclic sesquiterpene belonging to the eremophilane class and acting as a mycotoxin. The polypeptide is Transcription factor ORF10 (Penicillium roqueforti (strain FM164)).